We begin with the raw amino-acid sequence, 130 residues long: Flagellar assembly factor FliW (130 aa).

The protein belongs to the FliW family. As to quaternary structure, interacts with translational regulator CsrA and flagellin(s).

Its subcellular location is the cytoplasm. Acts as an anti-CsrA protein, binds CsrA and prevents it from repressing translation of its target genes, one of which is flagellin. Binds to flagellin and participates in the assembly of the flagellum. The sequence is that of Flagellar assembly factor FliW from Borreliella burgdorferi (strain ATCC 35210 / DSM 4680 / CIP 102532 / B31) (Borrelia burgdorferi).